Reading from the N-terminus, the 316-residue chain is Porphobilinogen deaminase (316 aa).

Cys242 is modified (S-(dipyrrolylmethanemethyl)cysteine).

This sequence belongs to the HMBS family. In terms of assembly, monomer. The cofactor is dipyrromethane.

The enzyme catalyses 4 porphobilinogen + H2O = hydroxymethylbilane + 4 NH4(+). The protein operates within porphyrin-containing compound metabolism; protoporphyrin-IX biosynthesis; coproporphyrinogen-III from 5-aminolevulinate: step 2/4. Functionally, tetrapolymerization of the monopyrrole PBG into the hydroxymethylbilane pre-uroporphyrinogen in several discrete steps. This chain is Porphobilinogen deaminase, found in Thioalkalivibrio sulfidiphilus (strain HL-EbGR7).